Consider the following 524-residue polypeptide: Apoptosis inhibitor 5-A (524 aa).

Residues 1–360 (MATVEELYRS…HQLGRKLPDF (360 aa)) form an ARM-like and Heat-like helical repeats region. The interval 440–524 (TLSWKPVQRT…RGNRSRGRIY (85 aa)) is disordered. A Nuclear localization signal motif is present at residues 455–476 (KRTSDETSSTSPPKKPIVGPKR). Positions 503–516 (GFQGGRGRGWGGRG) are enriched in gly residues.

It belongs to the API5 family. In terms of assembly, monomer.

Its subcellular location is the nucleus. In terms of biological role, may be an antiapoptotic factor. The sequence is that of Apoptosis inhibitor 5-A (api5-a) from Xenopus laevis (African clawed frog).